We begin with the raw amino-acid sequence, 629 residues long: Chaperone protein HtpG (629 aa).

The tract at residues 1-335 is a; substrate-binding; sequence MSSNPTSSVR…TEDLPLNVSR (335 aa). The segment at 336-547 is b; it reads ELVQASPVMA…KDALDSQFEK (212 aa). The tract at residues 548 to 629 is c; it reads MMKMMNKDAD…NELVEAATRS (82 aa).

Belongs to the heat shock protein 90 family. Homodimer.

The protein resides in the cytoplasm. Functionally, molecular chaperone. Has ATPase activity. In Chlorobaculum tepidum (strain ATCC 49652 / DSM 12025 / NBRC 103806 / TLS) (Chlorobium tepidum), this protein is Chaperone protein HtpG.